Reading from the N-terminus, the 269-residue chain is Achromobactin transport ATP-binding protein CbrD (269 aa).

Residues 4–240 (ITSRELTLGY…ALVKTVFNLD (237 aa)) enclose the ABC transporter domain. 36 to 43 (GSNGCGKS) is an ATP binding site.

It belongs to the ABC transporter superfamily.

It localises to the cell inner membrane. Part of the binding-protein-dependent transport system CbrABCD for uptake of the siderophore achromobactin. Probably responsible for energy coupling to the transport system. The sequence is that of Achromobactin transport ATP-binding protein CbrD (cbrD) from Dickeya dadantii (strain 3937) (Erwinia chrysanthemi (strain 3937)).